The following is a 185-amino-acid chain: CASP-like protein 5A1 (185 aa).

Over 1 to 45 (MNVSHPAVHPVGVPPALGGHAVPPRMRMRVRMEYLVFQGMPLPGT) the chain is Cytoplasmic. A helical transmembrane segment spans residues 46-66 (LGGLVLRLGQFCSALIAFSVM). Over 67 to 76 (LSVRDFSVTA) the chain is Extracellular. Residues 77–97 (FCYLVAATVLQCLWSLAMAVI) form a helical membrane-spanning segment. At 98 to 121 (DVYALLVKRSLRNPLLVSIFVVGD) the chain is on the cytoplasmic side. The helical transmembrane segment at 122–142 (GVTATLTFAAACASAGVIVLI) threads the bilayer. Topologically, residues 143-160 (GNDIAMCKDNPCANYEAA) are extracellular. The chain crosses the membrane as a helical span at residues 161 to 181 (IIMAFLSWFMVSISFILTFWL). The Cytoplasmic portion of the chain corresponds to 182 to 185 (LATL).

This sequence belongs to the Casparian strip membrane proteins (CASP) family. In terms of assembly, homodimer and heterodimers.

Its subcellular location is the cell membrane. The protein is CASP-like protein 5A1 of Picea sitchensis (Sitka spruce).